The following is a 638-amino-acid chain: MGKIIGIDLGTTNSCVAVMQGTQPTVIENSEGYRTTPSMVAFTKTGERLIGQAAKRQAVTNPKNTIFSIKRFMGRKYDEVPNEKKFASYDVVNEGGDARVKIGEKSYSPQEISAMILQKMKQTAEDFLGEKVTEAVITVPAYFNDAQRQATKDAGKIAGLEVKRIINEPTAAALAYGLDKKKENEKVAVFDLGGGTFDISILELGDGVFEVKSTDGDTHLGGDDFDQVIIDYLADEFKKQEGIDLRKDAIALQRLKEAAEKAKIELSSRTDTEINLPFITATQEGPKHLVINLTRAKFEAMSATLFDKVLEPCRRALKNSKLDMKEIDEVVLVGGSSRIPKVQALVKEFFGKEPNKSVNPDEVVAIGAAIQGGVLQGDVTDVLLLDVTPLSLGIETLGGVMTKLIEANSTIPTRKQETFSTAADNQTSVEVHVLQGERPMASDNKTLGRFHLGDIPPAPRGIPQIEVTFDIDANGILNVSAKDKATGKEQSIKIEASGKLTEAEIEKMKEDAKAHADEDQKRKEEIDLKNSADSLIFSTEKQLSELGDKLPADKKAEIESALEKLKEAHKAGSADAIKPAMDELSKVWSEAASNLYQQPGAEAGAAPQPETNGQQESKGGDGAVNAEYEVIDGDDDKK.

Residue threonine 196 is modified to Phosphothreonine; by autocatalysis. Residues alanine 592 to lysine 638 form a disordered region. Residues glutamine 597–glutamate 610 show a composition bias toward low complexity. Over residues glutamate 629–lysine 638 the composition is skewed to acidic residues.

It belongs to the heat shock protein 70 family.

In terms of biological role, acts as a chaperone. In Chlorobaculum parvum (strain DSM 263 / NCIMB 8327) (Chlorobium vibrioforme subsp. thiosulfatophilum), this protein is Chaperone protein DnaK.